The sequence spans 396 residues: S-adenosylmethionine synthase (396 aa).

H15 is a binding site for ATP. D17 contributes to the Mg(2+) binding site. E43 is a K(+) binding site. L-methionine is bound by residues E56 and Q99. Positions 99–109 (QSGDIAQGVDT) are flexible loop. Residues 173 to 175 (DGK), 241 to 242 (RF), D250, 256 to 257 (RK), A273, and K277 contribute to the ATP site. D250 contributes to the L-methionine binding site. An L-methionine-binding site is contributed by K281.

The protein belongs to the AdoMet synthase family. In terms of assembly, homotetramer; dimer of dimers. The cofactor is Mg(2+). K(+) is required as a cofactor.

The protein localises to the cytoplasm. The enzyme catalyses L-methionine + ATP + H2O = S-adenosyl-L-methionine + phosphate + diphosphate. Its pathway is amino-acid biosynthesis; S-adenosyl-L-methionine biosynthesis; S-adenosyl-L-methionine from L-methionine: step 1/1. Functionally, catalyzes the formation of S-adenosylmethionine (AdoMet) from methionine and ATP. The overall synthetic reaction is composed of two sequential steps, AdoMet formation and the subsequent tripolyphosphate hydrolysis which occurs prior to release of AdoMet from the enzyme. The polypeptide is S-adenosylmethionine synthase (Nocardioides sp. (strain ATCC BAA-499 / JS614)).